Consider the following 209-residue polypeptide: MANKKRSASSSRWLQEHFSDKYVLQAQKKGLRSRAWFKLDEIQQSDKIFKPGMTVVDLGAAPGGWSQYAVSQISDNGRVIACDLLPMDPIVGVDFLQGDFRDELVLKTLLERVGDNKVQVVMSDMAPNMSGTPAVDIPRSMYLVELALDMCRDVLAPEGSFIVKVFQGEGFDEYLREIRSLFTNVKIRKPDASRARSREVYIVATGRKL.

S-adenosyl-L-methionine contacts are provided by glycine 63, tryptophan 65, aspartate 83, aspartate 99, and aspartate 124. The Proton acceptor role is filled by lysine 164.

Belongs to the class I-like SAM-binding methyltransferase superfamily. RNA methyltransferase RlmE family.

It localises to the cytoplasm. It carries out the reaction uridine(2552) in 23S rRNA + S-adenosyl-L-methionine = 2'-O-methyluridine(2552) in 23S rRNA + S-adenosyl-L-homocysteine + H(+). In terms of biological role, specifically methylates the uridine in position 2552 of 23S rRNA at the 2'-O position of the ribose in the fully assembled 50S ribosomal subunit. In Photorhabdus laumondii subsp. laumondii (strain DSM 15139 / CIP 105565 / TT01) (Photorhabdus luminescens subsp. laumondii), this protein is Ribosomal RNA large subunit methyltransferase E.